The chain runs to 595 residues: Elongation factor 4 (595 aa).

A tr-type G domain is found at 2–184 (SHIRNFSIIA…RLVATIPPPT (183 aa)). GTP contacts are provided by residues 14 to 19 (DHGKST) and 131 to 134 (NKMD).

It belongs to the TRAFAC class translation factor GTPase superfamily. Classic translation factor GTPase family. LepA subfamily.

It is found in the cell inner membrane. The enzyme catalyses GTP + H2O = GDP + phosphate + H(+). Required for accurate and efficient protein synthesis under certain stress conditions. May act as a fidelity factor of the translation reaction, by catalyzing a one-codon backward translocation of tRNAs on improperly translocated ribosomes. Back-translocation proceeds from a post-translocation (POST) complex to a pre-translocation (PRE) complex, thus giving elongation factor G a second chance to translocate the tRNAs correctly. Binds to ribosomes in a GTP-dependent manner. In Pseudomonas syringae pv. tomato (strain ATCC BAA-871 / DC3000), this protein is Elongation factor 4.